The sequence spans 292 residues: Nucleotide-binding protein Ldb0621 (292 aa).

14–21 (GMSGAGKT) serves as a coordination point for ATP. 64 to 67 (DLRV) lines the GTP pocket.

This sequence belongs to the RapZ-like family.

In terms of biological role, displays ATPase and GTPase activities. This is Nucleotide-binding protein Ldb0621 from Lactobacillus delbrueckii subsp. bulgaricus (strain ATCC 11842 / DSM 20081 / BCRC 10696 / JCM 1002 / NBRC 13953 / NCIMB 11778 / NCTC 12712 / WDCM 00102 / Lb 14).